The chain runs to 472 residues: Adenosylhomocysteinase (472 aa).

T64, D138, and E198 together coordinate substrate. 199 to 201 (TTT) provides a ligand contact to NAD(+). Substrate contacts are provided by K228 and D232. NAD(+) contacts are provided by residues N233, 262–267 (GFGDVG), E285, N320, 341–343 (IGH), and N386.

The protein belongs to the adenosylhomocysteinase family. NAD(+) serves as cofactor.

Its subcellular location is the cytoplasm. The catalysed reaction is S-adenosyl-L-homocysteine + H2O = L-homocysteine + adenosine. It functions in the pathway amino-acid biosynthesis; L-homocysteine biosynthesis; L-homocysteine from S-adenosyl-L-homocysteine: step 1/1. May play a key role in the regulation of the intracellular concentration of adenosylhomocysteine. This chain is Adenosylhomocysteinase, found in Prochlorococcus marinus subsp. pastoris (strain CCMP1986 / NIES-2087 / MED4).